A 179-amino-acid polypeptide reads, in one-letter code: Putative 5'(3')-deoxyribonucleotidase (179 aa).

Asp-9 functions as the Nucleophile in the catalytic mechanism. The Mg(2+) site is built by Asp-9, Asp-11, and Asp-135. Residue Asp-11 is the Proton donor of the active site.

Belongs to the 5'(3')-deoxyribonucleotidase family. Requires Mg(2+) as cofactor.

Its function is as follows. Dephosphorylates the 5' and 2'(3')-phosphates of deoxyribonucleotides. The chain is Putative 5'(3')-deoxyribonucleotidase from Staphylococcus epidermidis (strain ATCC 12228 / FDA PCI 1200).